The sequence spans 292 residues: Elongation factor Ts (292 aa).

Residues 79 to 82 are involved in Mg(2+) ion dislocation from EF-Tu; that stretch reads TDFV.

Belongs to the EF-Ts family.

Its subcellular location is the cytoplasm. Associates with the EF-Tu.GDP complex and induces the exchange of GDP to GTP. It remains bound to the aminoacyl-tRNA.EF-Tu.GTP complex up to the GTP hydrolysis stage on the ribosome. This is Elongation factor Ts from Mycoplasmoides gallisepticum (strain R(low / passage 15 / clone 2)) (Mycoplasma gallisepticum).